Consider the following 367-residue polypeptide: Succinyl-diaminopimelate desuccinylase (367 aa).

His-67 contacts Zn(2+). Asp-69 is a catalytic residue. Asp-98 contacts Zn(2+). Glu-128 functions as the Proton acceptor in the catalytic mechanism. Zn(2+) contacts are provided by Glu-129, Glu-157, and His-342.

It belongs to the peptidase M20A family. DapE subfamily. As to quaternary structure, homodimer. Requires Zn(2+) as cofactor. Co(2+) is required as a cofactor.

The catalysed reaction is N-succinyl-(2S,6S)-2,6-diaminopimelate + H2O = (2S,6S)-2,6-diaminopimelate + succinate. It participates in amino-acid biosynthesis; L-lysine biosynthesis via DAP pathway; LL-2,6-diaminopimelate from (S)-tetrahydrodipicolinate (succinylase route): step 3/3. Catalyzes the hydrolysis of N-succinyl-L,L-diaminopimelic acid (SDAP), forming succinate and LL-2,6-diaminopimelate (DAP), an intermediate involved in the bacterial biosynthesis of lysine and meso-diaminopimelic acid, an essential component of bacterial cell walls. This chain is Succinyl-diaminopimelate desuccinylase, found in Campylobacter hominis (strain ATCC BAA-381 / DSM 21671 / CCUG 45161 / LMG 19568 / NCTC 13146 / CH001A).